The chain runs to 553 residues: Transcription factor IIIB 70 kDa subunit (553 aa).

Residues 6–39 (KQQKCKTCGHTQFDVNRYTAAGDVSCLRCGTVLE) form a TFIIB-type zinc finger. Cysteine 10, cysteine 13, cysteine 31, and cysteine 34 together coordinate Zn(2+). A run of 2 repeats spans residues 98-174 (IAAA…KMVK) and 193-272 (FVEK…EFKK). Residues 98 to 272 (IAAALKIPDY…LQRRLNEFKK (175 aa)) form an interaction with TBP and with the Pol III subunit C34 region. Residues 281-553 (KSFREVENLE…KGLLGGNMGF (273 aa)) form an interaction with TBP region. The disordered stretch occupies residues 473–523 (KQEADELTGNTSKSSSGNRRKRNKSSLPAELRKELGDIDLDEDGTPRSAAD). The span at 480–489 (TGNTSKSSSG) shows a compositional bias: low complexity.

Belongs to the TFIIB family. In terms of assembly, TFIIIB comprises the TATA-binding protein (TBP), the B-related factor (BRF) and a 70 kDa polypeptide.

It is found in the nucleus. Its function is as follows. General activator of RNA polymerase III transcription. Interacts with TBP. Binds to Pol III subunit C34 and to the TAU135 component of TFIIIC. In Candida albicans (strain SC5314 / ATCC MYA-2876) (Yeast), this protein is Transcription factor IIIB 70 kDa subunit (TDS4).